Reading from the N-terminus, the 242-residue chain is Protein HTATIP2 (242 aa).

The residue at position 2 (A2) is an N-acetylalanine. Residues 2–25 form a required for interaction with elongation factor EEF1A1 region; the sequence is AETEALSKLREDFRMQNKSVFILG. Positions 27, 28, 29, 30, 52, 53, 92, 93, 143, 147, 170, and 178 each coordinate NADPH. Residue Y143 is the Proton acceptor of the active site. K147 is a catalytic residue.

In terms of assembly, monomer. Forms homodimers during oxidative stress. Interacts (via N-terminus) with elongation factor EEF1A1 (via middle-region); the interaction is direct and competes with EEF1A1 binding to guanyl-nucleotide exchange factor EEF1B2, thereby inhibiting GDP for GTP exchange and reactivation of EEF1A1. Interacts with nuclear transport receptors XPO4, IPO5/RANBP5, IPO7, IPO9 and KPNB1 as well as GCN1L1/GCN1 and LRPPRC probably through their HEAT repeats. Binds NCOA5/CIA. As to quaternary structure, interacts (via N-terminus) with proteasome subunit PSMD4/s5a. (Microbial infection) Interacts with HIV-1 Tat (via activation domain). As to expression, high levels in liver, lung, skeletal muscle, pancreas and placenta. Moderate levels in heart and kidney. Low levels in brain. Not expressed or low levels in variant small cell lung carcinomas, 33% of hepatocellular carcinomas and neuroblastomas. Levels are reduced in the heart of patients with hypertrophic cardiomyopathy and failing hearts.

It localises to the cytoplasm. Its function is as follows. Represses translation by preventing reactivation of elongation factor eEF1A. May also inhibit nuclear import by competing with nuclear import substrates for binding to a subset of nuclear transport receptors. Has additionally been proposed to act as a redox sensor involved in cellular oxidative stress surveillance. The protein is Protein HTATIP2 of Homo sapiens (Human).